A 124-amino-acid polypeptide reads, in one-letter code: Fluoride-specific ion channel FluC (124 aa).

4 consecutive transmembrane segments (helical) span residues 4 to 24 (ILFV…ISIF), 35 to 55 (FGTL…YALG), 70 to 90 (VGLL…LLLI), and 95 to 115 (WLKA…MVYL). Residues G74 and T77 each coordinate Na(+).

It belongs to the fluoride channel Fluc/FEX (TC 1.A.43) family.

It is found in the cell inner membrane. The enzyme catalyses fluoride(in) = fluoride(out). Its activity is regulated as follows. Na(+) is not transported, but it plays an essential structural role and its presence is essential for fluoride channel function. Functionally, fluoride-specific ion channel. Important for reducing fluoride concentration in the cell, thus reducing its toxicity. The protein is Fluoride-specific ion channel FluC of Shewanella woodyi (strain ATCC 51908 / MS32).